Consider the following 276-residue polypeptide: Large ribosomal subunit protein uL2c (276 aa).

Residues alanine 225–glutamate 276 are disordered.

It belongs to the universal ribosomal protein uL2 family. Part of the 50S ribosomal subunit.

The protein localises to the plastid. It localises to the chloroplast. This is Large ribosomal subunit protein uL2c (rpl2) from Pinus koraiensis (Korean pine).